A 215-amino-acid polypeptide reads, in one-letter code: Probable transaldolase (215 aa).

Lys83 (schiff-base intermediate with substrate) is an active-site residue.

The protein belongs to the transaldolase family. Type 3B subfamily.

The protein localises to the cytoplasm. It catalyses the reaction D-sedoheptulose 7-phosphate + D-glyceraldehyde 3-phosphate = D-erythrose 4-phosphate + beta-D-fructose 6-phosphate. Its pathway is carbohydrate degradation; pentose phosphate pathway; D-glyceraldehyde 3-phosphate and beta-D-fructose 6-phosphate from D-ribose 5-phosphate and D-xylulose 5-phosphate (non-oxidative stage): step 2/3. In terms of biological role, transaldolase is important for the balance of metabolites in the pentose-phosphate pathway. This chain is Probable transaldolase, found in Streptococcus agalactiae serotype III (strain NEM316).